The chain runs to 490 residues: Pyridine nucleotide-disulfide oxidoreductase domain-containing protein 1 (490 aa).

It belongs to the class-I pyridine nucleotide-disulfide oxidoreductase family. PYROXD1 subfamily. FAD is required as a cofactor.

It is found in the nucleus. Its subcellular location is the cytoplasm. It localises to the myofibril. The protein resides in the sarcomere. In terms of biological role, probable FAD-dependent oxidoreductase; involved in the cellular oxidative stress response. Required for normal sarcomere structure and muscle fiber integrity. This is Pyridine nucleotide-disulfide oxidoreductase domain-containing protein 1 (pyroxd1) from Danio rerio (Zebrafish).